The chain runs to 474 residues: Sulfide dehydrogenase subunit alpha (474 aa).

A propeptide spanning residues 1–2 (MP) is cleaved from the precursor. The [4Fe-4S] cluster site is built by Cys42, Cys45, Cys52, and Cys56. [3Fe-4S] cluster-binding residues include Cys101, Cys107, and Cys111.

Heterodimer of alpha and beta subunits. FAD is required as a cofactor. The cofactor is [3Fe-4S] cluster. Requires [4Fe-4S] cluster as cofactor.

Its subcellular location is the cytoplasm. It catalyses the reaction n sulfur + hydrogen sulfide + NADP(+) = (n+1) sulfur + NADPH. The enzyme catalyses 2 reduced [2Fe-2S]-[ferredoxin] + NADP(+) + H(+) = 2 oxidized [2Fe-2S]-[ferredoxin] + NADPH. In terms of biological role, a bifunctional enzyme that catalyzes the reduction of elemental sulfur or polysulfide to hydrogen sulfide with NADPH as electron donor. Also functions as a reduced ferredoxin:NADP oxidoreductase with a very high affinity for reduced ferredoxin. Exhibits a broad specificity for various physiological and non-physiological substrates with varied reduction potentials such as methyl viologen, benzyl viologen, FAD, FMN, methylene blue, 2,6-dichlorophenolindophenol (DCIP), cytochrome C and ferricyanide with highest preference for benzyl viologen. Does not reduce fumarate, succinate, nitrate, nitrite, sulfate, sulfite or protons. Does not possess any hydrogenase activity or NADPH-dependent glutamate synthase activity. This Pyrococcus furiosus (strain ATCC 43587 / DSM 3638 / JCM 8422 / Vc1) protein is Sulfide dehydrogenase subunit alpha.